The sequence spans 184 residues: Ribosome-recycling factor (184 aa).

Belongs to the RRF family.

The protein resides in the cytoplasm. Its function is as follows. Responsible for the release of ribosomes from messenger RNA at the termination of protein biosynthesis. May increase the efficiency of translation by recycling ribosomes from one round of translation to another. The protein is Ribosome-recycling factor of Leptospira interrogans serogroup Icterohaemorrhagiae serovar copenhageni (strain Fiocruz L1-130).